The primary structure comprises 537 residues: Carbamoyl phosphate synthase large chain, C-terminal section (537 aa).

A carbamoyl phosphate synthetic domain region spans residues 1–395 (MSKKVVILGS…AYYKAQLSAG (395 aa)). Positions 122–313 (RELIIELGLK…LAKIATKVAI (192 aa)) constitute an ATP-grasp domain. R158, K197, L199, E204, G229, V230, H231, S232, Q272, and E284 together coordinate ATP. Residues Q272, E284, and N286 each contribute to the Mg(2+) site. 3 residues coordinate Mn(2+): Q272, E284, and N286. Residues 396-537 (YRLPEKGNLF…VHSLQEIYNI (142 aa)) form the MGS-like domain. Positions 396–537 (YRLPEKGNLF…VHSLQEIYNI (142 aa)) are allosteric domain.

Belongs to the CarB family. As to quaternary structure, composed of two chains; the small (or glutamine) chain promotes the hydrolysis of glutamine to ammonia, which is used by the large (or ammonia) chain to synthesize carbamoyl phosphate. Tetramer of heterodimers (alpha,beta)4. Mg(2+) is required as a cofactor. Requires Mn(2+) as cofactor.

The catalysed reaction is hydrogencarbonate + L-glutamine + 2 ATP + H2O = carbamoyl phosphate + L-glutamate + 2 ADP + phosphate + 2 H(+). It carries out the reaction hydrogencarbonate + NH4(+) + 2 ATP = carbamoyl phosphate + 2 ADP + phosphate + 2 H(+). The protein operates within amino-acid biosynthesis; L-arginine biosynthesis; carbamoyl phosphate from bicarbonate: step 1/1. It participates in pyrimidine metabolism; UMP biosynthesis via de novo pathway; (S)-dihydroorotate from bicarbonate: step 1/3. Large subunit of the glutamine-dependent carbamoyl phosphate synthetase (CPSase). CPSase catalyzes the formation of carbamoyl phosphate from the ammonia moiety of glutamine, carbonate, and phosphate donated by ATP, constituting the first step of 2 biosynthetic pathways, one leading to arginine and/or urea and the other to pyrimidine nucleotides. The large subunit (synthetase) binds the substrates ammonia (free or transferred from glutamine from the small subunit), hydrogencarbonate and ATP and carries out an ATP-coupled ligase reaction, activating hydrogencarbonate by forming carboxy phosphate which reacts with ammonia to form carbamoyl phosphate. In Aquifex aeolicus (strain VF5), this protein is Carbamoyl phosphate synthase large chain, C-terminal section (carB2).